The chain runs to 394 residues: Mitogen-activated protein kinase 2 (394 aa).

Positions 1-10 (MDGPAQQTDT) are enriched in polar residues. The disordered stretch occupies residues 1–27 (MDGPAQQTDTVMAEAAAAQQPAPPSQP). In terms of domain architecture, Protein kinase spans 61-346 (KPPIMPIGKG…VEDALAHPYL (286 aa)). Residues 67–75 (IGKGAYGIV) and Lys-90 each bind ATP. The Proton acceptor role is filled by Asp-187. Residue Thr-219 is modified to Phosphothreonine. The TXY signature appears at 219–221 (TEY). Position 221 is a phosphotyrosine (Tyr-221). The residue at position 224 (Thr-224) is a Phosphothreonine.

It belongs to the protein kinase superfamily. CMGC Ser/Thr protein kinase family. MAP kinase subfamily. Mg(2+) serves as cofactor. Activated by cold, wounding and UV-C in a cultivar-dependent manner; phosphorylated at Tyr-221 in cv. Subicho but not in cv. Pungchon. As to expression, expressed constitutively in roots, stems, flowers and fruits of the hot pepper (cv. Subicho).

The catalysed reaction is L-seryl-[protein] + ATP = O-phospho-L-seryl-[protein] + ADP + H(+). The enzyme catalyses L-threonyl-[protein] + ATP = O-phospho-L-threonyl-[protein] + ADP + H(+). Its activity is regulated as follows. Activated by threonine and tyrosine phosphorylation. Protein kinase involved in oxidative stress-mediated and innate immune MAP kinase signaling cascades. This Capsicum annuum (Capsicum pepper) protein is Mitogen-activated protein kinase 2.